Consider the following 394-residue polypeptide: Protein TsgA homolog (394 aa).

12 helical membrane-spanning segments follow: residues 11–31, 51–71, 76–96, 101–121, 135–155, 163–183, 205–225, 245–265, 273–293, 299–319, 333–353, and 362–382; these read WISFFSYALTGAVVIVTGMVL, FLNAGILLAVFLNAWLMEIVP, LIFGFVLMVLAVLGLMNSHSL, LCMFVLGVVSGITMSIGTFLI, LFTDSFFSMAGTLFPIIAAAI, YWVYACIGVIYVAIFILALCF, LGVALLAVAALCYILGQLGFI, SVVGYFWTAYMIGMWAFSAIL, IVTALALASTLLMYWFINTTD, WIIMGLGFFSSAIYTTIITLG, FILTCGTIGTMLTFVVTGPIV, and LATTNSLYAVVFLMCLLLGFV.

It belongs to the major facilitator superfamily. TsgA family.

The protein resides in the cell inner membrane. In Erwinia tasmaniensis (strain DSM 17950 / CFBP 7177 / CIP 109463 / NCPPB 4357 / Et1/99), this protein is Protein TsgA homolog.